The following is a 201-amino-acid chain: Arachin 25 kDa protein (201 aa).

In terms of assembly, this is one of six apparently different protein chains that constitute the peanut protein arachin.

In Arachis hypogaea (Peanut), this protein is Arachin 25 kDa protein.